Here is a 562-residue protein sequence, read N- to C-terminus: Potassium-transporting ATPase potassium-binding subunit (562 aa).

Transmembrane regions (helical) follow at residues 6–26 (FLLIASFMLVLLVLARPLGSF), 63–83 (ALAILLFNILGIALLFALLMM), 132–152 (GLTVQNFLSAATGIAVAFALI), 175–195 (LYVLLPIALIIALIFVSQGVL), 253–273 (FVQMLAIFLIPCALCFAFGQV), 283–303 (LIWAMSLIFVVAVVVVMYAEL), 327–347 (FGILATSMYAVVTTAASCGAV), 356–376 (ALGGMVPMWLMQIGEVVFGGV), 379–399 (GLYGMLLFVLLTVFIAGLMIG), 416–436 (MTALAILVTPAVVLLGTALAL), 483–503 (LLLAAAMFLGRFGVILPVLAI), and 526–546 (LFIGLLVGTVLLVGALTFIPA).

This sequence belongs to the KdpA family. As to quaternary structure, the system is composed of three essential subunits: KdpA, KdpB and KdpC.

Its subcellular location is the cell inner membrane. In terms of biological role, part of the high-affinity ATP-driven potassium transport (or Kdp) system, which catalyzes the hydrolysis of ATP coupled with the electrogenic transport of potassium into the cytoplasm. This subunit binds the periplasmic potassium ions and delivers the ions to the membrane domain of KdpB through an intramembrane tunnel. In Yersinia enterocolitica serotype O:8 / biotype 1B (strain NCTC 13174 / 8081), this protein is Potassium-transporting ATPase potassium-binding subunit.